The following is a 513-amino-acid chain: L-threonine dehydratase biosynthetic IlvA (513 aa).

Lys-61 bears the N6-(pyridoxal phosphate)lysine mark. Pyridoxal 5'-phosphate-binding positions include Asn-88, 187–191 (GGGGL), and Ser-314. 2 consecutive ACT-like domains span residues 338 to 409 (ALLA…DLSN) and 432 to 504 (RLYS…DVTE).

This sequence belongs to the serine/threonine dehydratase family. As to quaternary structure, homotetramer. Pyridoxal 5'-phosphate serves as cofactor.

It catalyses the reaction L-threonine = 2-oxobutanoate + NH4(+). The protein operates within amino-acid biosynthesis; L-isoleucine biosynthesis; 2-oxobutanoate from L-threonine: step 1/1. Catalyzes the anaerobic formation of alpha-ketobutyrate and ammonia from threonine in a two-step reaction. The first step involved a dehydration of threonine and a production of enamine intermediates (aminocrotonate), which tautomerizes to its imine form (iminobutyrate). Both intermediates are unstable and short-lived. The second step is the nonenzymatic hydrolysis of the enamine/imine intermediates to form 2-ketobutyrate and free ammonia. In the low water environment of the cell, the second step is accelerated by RidA. In Pasteurella multocida (strain Pm70), this protein is L-threonine dehydratase biosynthetic IlvA (ilvA).